We begin with the raw amino-acid sequence, 102 residues long: Small ribosomal subunit protein uS10 (102 aa).

It belongs to the universal ribosomal protein uS10 family. In terms of assembly, part of the 30S ribosomal subunit.

In terms of biological role, involved in the binding of tRNA to the ribosomes. This chain is Small ribosomal subunit protein uS10, found in Staphylococcus haemolyticus (strain JCSC1435).